Here is a 452-residue protein sequence, read N- to C-terminus: Nuclear distribution protein nudF 2 (452 aa).

The stretch at 76–101 (ALQILDLESKVAGLQAELSSLTLTSR) forms a coiled coil. WD repeat units lie at residues 123-164 (SHRD…RTLK), 166-206 (HIRA…ANIR), 210-250 (GHDH…CVKV), 253-292 (SSDA…QKSA), 295-355 (GHEN…IKTL), 357-396 (GHDN…KLVK), and 401-449 (AHSH…SCVR).

This sequence belongs to the WD repeat LIS1/nudF family. Self-associates. Interacts with nudE and dynein.

The protein resides in the cytoplasm. The protein localises to the cytoskeleton. Its subcellular location is the spindle pole. Functionally, positively regulates the activity of the minus-end directed microtubule motor protein dynein. May enhance dynein-mediated microtubule sliding by targeting dynein to the microtubule plus end. Required for nuclear migration during vegetative growth as well as development. Required for retrograde early endosome (EE) transport from the hyphal tip. Required for localization of dynein to the mitotic spindle poles. Recruits additional proteins to the dynein complex at SPBs. The protein is Nuclear distribution protein nudF 2 of Talaromyces marneffei (strain ATCC 18224 / CBS 334.59 / QM 7333) (Penicillium marneffei).